Consider the following 358-residue polypeptide: 4-hydroxy-2-oxovalerate aldolase 2 (358 aa).

In terms of domain architecture, Pyruvate carboxyltransferase spans 16–268 (VLLHDMCLRD…ETGVDLFKLM (253 aa)). 24–25 (RD) is a binding site for substrate. Asp25 contacts Mn(2+). The active-site Proton acceptor is His28. The substrate site is built by Ser178 and His207. Residues His207 and His209 each coordinate Mn(2+). A substrate-binding site is contributed by Tyr298.

The protein belongs to the 4-hydroxy-2-oxovalerate aldolase family.

The enzyme catalyses (S)-4-hydroxy-2-oxopentanoate = acetaldehyde + pyruvate. This is 4-hydroxy-2-oxovalerate aldolase 2 from Methylibium petroleiphilum (strain ATCC BAA-1232 / LMG 22953 / PM1).